The chain runs to 397 residues: Pectate lyase (397 aa).

An N-terminal signal peptide occupies residues 1 to 25 (MDVYRIRISVFFLLVLLTFAALTTA). Asn-134 is a glycosylation site (N-linked (GlcNAc...) asparagine). The Ca(2+) site is built by Asp-191, Asp-216, and Asp-220. N-linked (GlcNAc...) asparagine glycosylation occurs at Asn-227. Arg-272 is an active-site residue.

This sequence belongs to the polysaccharide lyase 1 family. Ca(2+) is required as a cofactor.

It catalyses the reaction Eliminative cleavage of (1-&gt;4)-alpha-D-galacturonan to give oligosaccharides with 4-deoxy-alpha-D-galact-4-enuronosyl groups at their non-reducing ends.. Its pathway is glycan metabolism; pectin degradation; 2-dehydro-3-deoxy-D-gluconate from pectin: step 2/5. This chain is Pectate lyase, found in Nicotiana tabacum (Common tobacco).